The following is a 159-amino-acid chain: uncharacterized protein (159 aa).

The a divalent metal cation site is built by histidine 44, histidine 124, and histidine 128.

It belongs to the DinB family.

This is an uncharacterized protein from Bacillus subtilis (strain 168).